Here is a 203-residue protein sequence, read N- to C-terminus: MSQREGSLEDHQTDSSFSFLPHLEAKIRQTHNLARLLTKYADQLLEEYVQQQGEPFGLPGFSPPRLPLAGLSGPAPSHAGLPVSERLRQDAAALSALPALLDAVRRRQAELNPRAPRLLRSLEDAARQVRALGAAVETVLAALGAAARGPVPEPVATSALFTSNSAAGVFSAKVLGLHVCGLYGEWVSRTEGDLGQLVPGGVA.

This sequence belongs to the IL-6 superfamily. As to expression, expressed in the ventricle and atrium of adult rats. Also detected in the lung, kidney, liver, skeletal muscle, stomach and urinary bladder. Not detected in brain, colon, testis, spleen or thymus. Overexpressed in the ventricles in the case of hypertension and hypertrophy.

It localises to the secreted. Induces cardiac myocyte hypertrophy in vitro. Binds to and activates the ILST/gp130 receptor. The sequence is that of Cardiotrophin-1 (Ctf1) from Rattus norvegicus (Rat).